The chain runs to 549 residues: Probable protein kinase UbiB (549 aa).

Residues 123–501 (DFDDVPLASA…QHKAHKSNYL (379 aa)) form the Protein kinase domain. Residues 129-137 (LASASIAQV) and K152 each bind ATP. D287 acts as the Proton acceptor in catalysis. 2 helical membrane passes run 498–517 (SNYLLITSAVFVICGTILFT) and 521–540 (TLWASLLCLGTGAGLWLLGW).

This sequence belongs to the ABC1 family. UbiB subfamily.

It localises to the cell inner membrane. It functions in the pathway cofactor biosynthesis; ubiquinone biosynthesis [regulation]. Its function is as follows. Is probably a protein kinase regulator of UbiI activity which is involved in aerobic coenzyme Q (ubiquinone) biosynthesis. In Shewanella denitrificans (strain OS217 / ATCC BAA-1090 / DSM 15013), this protein is Probable protein kinase UbiB.